The primary structure comprises 64 residues: PYLa/PGLa A (64 aa).

The signal sequence occupies residues 1-20 (MYKQIFLCLIIAALCATIMA). Positions 21–35 (EASAFADADEDDDKR) are excised as a propeptide. L59 carries the leucine amide modification. The propeptide occupies 60–64 (GRRDS).

The protein belongs to the gastrin/cholecystokinin family. Magainin subfamily. In terms of tissue distribution, expressed by the skin glands. Synthesized in the stomach and stored in a novel granular multinucleated cell in the gastric mucosa. Stored as active, processed peptides in large granules within the granular gland secretions of the skin.

The protein localises to the secreted. Functionally, PGLa and PGLa-H display a broad-spectrum of antibacterial activity against a range of Gram-positive and Gram-negative bacteria. PGLa also displays antifungal activity against C.albicans ATCC 14053. PGLa-H shows moderate antibacterial activity against the multidrug-resistant methicillin-resistant S.aureus (MRSA) but exhibits very little hemolytic activity. This is PYLa/PGLa A (pgla-a) from Xenopus laevis (African clawed frog).